Consider the following 251-residue polypeptide: 5'-nucleotidase SurE (251 aa).

Aspartate 8, aspartate 9, serine 39, and asparagine 95 together coordinate a divalent metal cation.

It belongs to the SurE nucleotidase family. Requires a divalent metal cation as cofactor.

The protein localises to the cytoplasm. It catalyses the reaction a ribonucleoside 5'-phosphate + H2O = a ribonucleoside + phosphate. Its function is as follows. Nucleotidase that shows phosphatase activity on nucleoside 5'-monophosphates. This is 5'-nucleotidase SurE from Ralstonia nicotianae (strain ATCC BAA-1114 / GMI1000) (Ralstonia solanacearum).